The following is a 451-amino-acid chain: Phosphoglucosamine mutase (451 aa).

The active-site Phosphoserine intermediate is the Ser107. The Mg(2+) site is built by Ser107, Asp246, Asp248, and Asp250. Phosphoserine is present on Ser107.

This sequence belongs to the phosphohexose mutase family. Requires Mg(2+) as cofactor. In terms of processing, activated by phosphorylation.

The catalysed reaction is alpha-D-glucosamine 1-phosphate = D-glucosamine 6-phosphate. Its function is as follows. Catalyzes the conversion of glucosamine-6-phosphate to glucosamine-1-phosphate. This chain is Phosphoglucosamine mutase, found in Burkholderia cenocepacia (strain HI2424).